We begin with the raw amino-acid sequence, 502 residues long: uncharacterized protein (502 aa).

The next 2 helical transmembrane spans lie at 10–30 (NLTL…IXIF) and 473–493 (FSLI…FGLV).

The protein resides in the cell membrane. This is an uncharacterized protein from Borreliella burgdorferi (strain ATCC 35210 / DSM 4680 / CIP 102532 / B31) (Borrelia burgdorferi).